We begin with the raw amino-acid sequence, 879 residues long: Leucine--tRNA ligase (879 aa).

A 'HIGH' region motif is present at residues 45–55 (PYPSGALHMGH). The 'KMSKS' region motif lies at 637–641 (KMSKS). Lysine 640 contacts ATP.

This sequence belongs to the class-I aminoacyl-tRNA synthetase family.

The protein localises to the cytoplasm. The enzyme catalyses tRNA(Leu) + L-leucine + ATP = L-leucyl-tRNA(Leu) + AMP + diphosphate. This is Leucine--tRNA ligase from Xylella fastidiosa (strain 9a5c).